The following is a 188-amino-acid chain: Elongation factor P (188 aa).

This sequence belongs to the elongation factor P family.

It is found in the cytoplasm. Its pathway is protein biosynthesis; polypeptide chain elongation. Involved in peptide bond synthesis. Stimulates efficient translation and peptide-bond synthesis on native or reconstituted 70S ribosomes in vitro. Probably functions indirectly by altering the affinity of the ribosome for aminoacyl-tRNA, thus increasing their reactivity as acceptors for peptidyl transferase. This Rhodopseudomonas palustris (strain TIE-1) protein is Elongation factor P.